The primary structure comprises 142 residues: Large ribosomal subunit protein uL29 (142 aa).

This sequence belongs to the universal ribosomal protein uL29 family.

The protein is Large ribosomal subunit protein uL29 (RPL35) of Theileria annulata.